Here is a 444-residue protein sequence, read N- to C-terminus: Guanosine nucleotide diphosphate dissociation inhibitor 2 (444 aa).

The protein belongs to the Rab GDI family. In terms of tissue distribution, expressed in roots and floral buds.

Functionally, regulates the GDP/GTP exchange reaction of most RAB proteins by inhibiting the dissociation of GDP from them, and the subsequent binding of GTP. This chain is Guanosine nucleotide diphosphate dissociation inhibitor 2 (GDI2), found in Arabidopsis thaliana (Mouse-ear cress).